A 119-amino-acid chain; its full sequence is Large ribosomal subunit protein uL18 (119 aa).

The protein belongs to the universal ribosomal protein uL18 family. In terms of assembly, part of the 50S ribosomal subunit; part of the 5S rRNA/L5/L18/L25 subcomplex. Contacts the 5S and 23S rRNAs.

In terms of biological role, this is one of the proteins that bind and probably mediate the attachment of the 5S RNA into the large ribosomal subunit, where it forms part of the central protuberance. The protein is Large ribosomal subunit protein uL18 of Solibacter usitatus (strain Ellin6076).